Reading from the N-terminus, the 280-residue chain is Diaminopimelate epimerase (280 aa).

Asn-13 and Asn-64 together coordinate substrate. Cys-73 acts as the Proton donor in catalysis. Substrate-binding positions include Gly-74–Asn-75, Asn-164, Asn-197, and Glu-215–Arg-216. Cys-224 serves as the catalytic Proton acceptor. Gly-225–Thr-226 contacts substrate.

Belongs to the diaminopimelate epimerase family. Homodimer.

The protein localises to the cytoplasm. It catalyses the reaction (2S,6S)-2,6-diaminopimelate = meso-2,6-diaminopimelate. Its pathway is amino-acid biosynthesis; L-lysine biosynthesis via DAP pathway; DL-2,6-diaminopimelate from LL-2,6-diaminopimelate: step 1/1. In terms of biological role, catalyzes the stereoinversion of LL-2,6-diaminopimelate (L,L-DAP) to meso-diaminopimelate (meso-DAP), a precursor of L-lysine and an essential component of the bacterial peptidoglycan. The polypeptide is Diaminopimelate epimerase (Leptospira biflexa serovar Patoc (strain Patoc 1 / Ames)).